Reading from the N-terminus, the 507-residue chain is ATP synthase subunit alpha (507 aa).

Residue 168 to 175 (GDRQTGKT) coordinates ATP.

The protein belongs to the ATPase alpha/beta chains family. F-type ATPases have 2 components, CF(1) - the catalytic core - and CF(0) - the membrane proton channel. CF(1) has five subunits: alpha(3), beta(3), gamma(1), delta(1), epsilon(1). CF(0) has three main subunits: a(1), b(2) and c(9-12). The alpha and beta chains form an alternating ring which encloses part of the gamma chain. CF(1) is attached to CF(0) by a central stalk formed by the gamma and epsilon chains, while a peripheral stalk is formed by the delta and b chains.

It is found in the cell membrane. The catalysed reaction is ATP + H2O + 4 H(+)(in) = ADP + phosphate + 5 H(+)(out). Its function is as follows. Produces ATP from ADP in the presence of a proton gradient across the membrane. The alpha chain is a regulatory subunit. In Mesomycoplasma hyopneumoniae (strain 232) (Mycoplasma hyopneumoniae), this protein is ATP synthase subunit alpha.